A 306-amino-acid chain; its full sequence is Protoheme IX farnesyltransferase (306 aa).

Transmembrane regions (helical) follow at residues 32–52, 57–77, 108–128, 129–149, 157–177, 183–203, 230–250, 252–272, and 285–305; these read VVQL…PGMP, WALM…AAAF, LLFS…WVNP, LTMW…TVIL, IVIG…AMTG, ALIL…ALAL, VFLY…YGMS, WIYL…GFRL, and FRFS…DHYL.

This sequence belongs to the UbiA prenyltransferase family. Protoheme IX farnesyltransferase subfamily.

The protein localises to the cell inner membrane. It carries out the reaction heme b + (2E,6E)-farnesyl diphosphate + H2O = Fe(II)-heme o + diphosphate. The protein operates within porphyrin-containing compound metabolism; heme O biosynthesis; heme O from protoheme: step 1/1. Its function is as follows. Converts heme B (protoheme IX) to heme O by substitution of the vinyl group on carbon 2 of heme B porphyrin ring with a hydroxyethyl farnesyl side group. The polypeptide is Protoheme IX farnesyltransferase (Acidovorax ebreus (strain TPSY) (Diaphorobacter sp. (strain TPSY))).